We begin with the raw amino-acid sequence, 1164 residues long: Avirulence protein AvrBs3 (1164 aa).

2 disordered regions span residues 1–68 (MDPI…SAGS) and 128–152 (ARPP…PAAQ). The segment covering 131–141 (PRAKPAPRRRA) has biased composition (basic residues). Residues 142 to 151 (AQPSDASPAA) are compositionally biased toward low complexity. Residues 225 to 254 (IVGVGKQWSGARALEALLTVAGELRGPPLQ) form a Cryptic repeat -1 repeat. One copy of the Cryptic repeat 0 repeat lies at 255–288 (LDTGQLLKIAKRGGVTAVEAVHAWRNALTGAPLN). Core repeat repeat units lie at residues 289–322 (LTPE…QAHG), 323–356 (LTPQ…QAHG), 357–390 (LTPQ…QAHG), 391–424 (LTPE…QAHG), 425–458 (LTPE…QAHG), 459–492 (LTPE…QAHG), 493–526 (LTPE…QAHG), 527–560 (LTPE…QAHG), 561–594 (LTPE…QAHG), 595–628 (LTPQ…QAHG), 629–662 (LTPE…QAHG), 663–696 (LTPE…QAHG), 697–730 (LTPE…QAHG), 731–764 (LTPE…QAHG), 765–798 (LTPE…QAHG), 799–832 (LTPQ…QAHG), and 833–866 (LTPE…QAHG). Residues 867–886 (LTPQQVVAIASNGGGRPALE) form a Core repeat 17.5 repeat. The Nuclear localization signal NLS1 motif lies at 1021–1024 (KRAK). Basic and acidic residues predominate over residues 1048-1060 (DLDAPSPMHEGDQ). A disordered region spans residues 1048 to 1091 (DLDAPSPMHEGDQTRASSRKRSRSDRAVTGPSAQQSFEVRVPEQ). Positions 1067 to 1070 (KRSR) match the Nuclear localization signal NLS2 motif. The Nuclear localization signal NLS3 motif lies at 1104-1107 (KRPR). Residues 1135-1164 (QDEDPFAGAADDFPAFNEEELAWLMELLPQ) are acidic activation domain AAD.

It belongs to the transcription activator-like effector (TALE) family. As to quaternary structure, forms a homodimer in the plant cell cytoplasm, prior to nuclear import. Interacts with the plant cell importin alpha-1 (Caimp alpha-1) and importin alpha-2 (Caimp alpha-2) via the nuclear localization signal NLS2, but not via NLS3.

It is found in the secreted. The protein resides in the host nucleus. Avirulence protein. Acts as a transcription factor in C.annuum plants. In susceptible plants lacking the Bs3 resistance gene induces expression of a number of genes, including genes homologous to a family of auxin-induced genes, alpha-expansin genes, pectate lyase, anthocyanidin glucoside rhamnosyl transferase and at least one transcription factor, UPA20. Their expression leads to plant hypertrophy in mesophyll cells, probably mainly mediated by UPA20. In resistant plants induces the hypersensitive response (HR), by inducing transcription of plant Bs3 which induces HR; a mutated AvrBs3 missing repeats 11-14 does not induce expression of Bs3 but does induce Bs3-E, a Bs3 allele with a modified promoter. Binds DNA corresponding to the upa-box in sequence-specific manner. The chain is Avirulence protein AvrBs3 (avrBs3) from Xanthomonas euvesicatoria.